Consider the following 147-residue polypeptide: Ribonuclease VapC43 (147 aa).

The PINc domain maps to 3 to 139 (CVDVNVLVYA…ARFRRLRWRH (137 aa)). Residues aspartate 5 and aspartate 108 each contribute to the Mg(2+) site.

Belongs to the PINc/VapC protein family. Requires Mg(2+) as cofactor.

In terms of biological role, toxic component of a type II toxin-antitoxin (TA) system. An RNase. Its toxic effect is neutralized by coexpression with cognate antitoxin VapB43. The protein is Ribonuclease VapC43 of Mycobacterium tuberculosis (strain CDC 1551 / Oshkosh).